Consider the following 203-residue polypeptide: Thymidylate kinase (203 aa).

10 to 17 (GIDGCGKT) contributes to the ATP binding site.

It belongs to the thymidylate kinase family.

It catalyses the reaction dTMP + ATP = dTDP + ADP. Its function is as follows. Phosphorylation of dTMP to form dTDP in both de novo and salvage pathways of dTTP synthesis. This Thermoanaerobacter pseudethanolicus (strain ATCC 33223 / 39E) (Clostridium thermohydrosulfuricum) protein is Thymidylate kinase.